The chain runs to 282 residues: ADP-ribosyl cyclase/cyclic ADP-ribose hydrolase (282 aa).

Positions Met1 to Ala24 are cleaved as a signal peptide. 5 cysteine pairs are disulfide-bonded: Cys39-Cys58, Cys75-Cys155, Cys136-Cys149, Cys230-Cys251, and Cys263-Cys272.

Belongs to the ADP-ribosyl cyclase family. Post-translationally, has different isoforms which may be the result of different amounts of phosphorylation. Immature occoyctes. Oocytes.

Its subcellular location is the cytoplasmic vesicle. It catalyses the reaction NAD(+) = cyclic ADP-beta-D-ribose + nicotinamide + H(+). The catalysed reaction is nicotinate + NADP(+) = nicotinate-adenine dinucleotide phosphate + nicotinamide. It carries out the reaction 2'-phospho-cyclic ADP-ribose + nicotinate = nicotinate-adenine dinucleotide phosphate. Its activity is regulated as follows. Activity is presumably regulated by its sequestration in vesicles before egg fertilization. After fertilization and upon NADase release, it could then be regulated via its potential phosphorylation sites. Its function is as follows. Synthesizes cyclic ADP-ribose (cADPR), a second messenger for calcium mobilization from endoplasmic reticulum; ADP-ribose is a minor product. Synthesizes the Ca(2+) mobilizer nicotinate-adenine dinucleotide phosphate from 2'-phospho-cADPR and nicotinic acid as well as from NADP(+) and nicotinic acid; with NADP(+) as substrate preferentially catalyzes NADP(+) hydrolysis rather than NAADP(+) synthesis, about 70-fold better at pH 7.4. Has cADPR hydrolase activity at very high enzyme concentrations, which is probably not physiological. The conversion of NAD(+) into ADP-ribose is also only observed at high enzyme concentrations and results from the hydrolysis of cADP-ribose. In Aplysia californica (California sea hare), this protein is ADP-ribosyl cyclase/cyclic ADP-ribose hydrolase.